Consider the following 367-residue polypeptide: Histidinol-phosphate aminotransferase (367 aa).

Lys-227 carries the N6-(pyridoxal phosphate)lysine modification.

The protein belongs to the class-II pyridoxal-phosphate-dependent aminotransferase family. Histidinol-phosphate aminotransferase subfamily. As to quaternary structure, homodimer. The cofactor is pyridoxal 5'-phosphate.

It carries out the reaction L-histidinol phosphate + 2-oxoglutarate = 3-(imidazol-4-yl)-2-oxopropyl phosphate + L-glutamate. It participates in amino-acid biosynthesis; L-histidine biosynthesis; L-histidine from 5-phospho-alpha-D-ribose 1-diphosphate: step 7/9. The chain is Histidinol-phosphate aminotransferase from Leptospira borgpetersenii serovar Hardjo-bovis (strain JB197).